We begin with the raw amino-acid sequence, 364 residues long: Aminomethyltransferase (364 aa).

This sequence belongs to the GcvT family. The glycine cleavage system is composed of four proteins: P, T, L and H.

The catalysed reaction is N(6)-[(R)-S(8)-aminomethyldihydrolipoyl]-L-lysyl-[protein] + (6S)-5,6,7,8-tetrahydrofolate = N(6)-[(R)-dihydrolipoyl]-L-lysyl-[protein] + (6R)-5,10-methylene-5,6,7,8-tetrahydrofolate + NH4(+). Its function is as follows. The glycine cleavage system catalyzes the degradation of glycine. The protein is Aminomethyltransferase of Shigella sonnei (strain Ss046).